Here is an 828-residue protein sequence, read N- to C-terminus: Periplasmic nitrate reductase (828 aa).

A signal peptide (tat-type signal) is located at residues 1 to 31 (MKLSRRSFMKANAVAAAAAAAGLSVPGVARA). Residues 39 to 95 (IKWDKAPCRFCGTGCGVLVGTQQGRVVACQGDPDAPVNRGLNCIKGYFLPKIMYGKD) form the 4Fe-4S Mo/W bis-MGD-type domain. Residues C46, C49, C53, and C81 each contribute to the [4Fe-4S] cluster site. Residues K83, Q150, N175, C179, 212–219 (WGANMAEM), 243–247 (STYQH), 262–264 (QSD), M372, Q376, N482, 508–509 (SD), K531, D558, and 718–727 (TGRVLEHWHT) each bind Mo-bis(molybdopterin guanine dinucleotide). F794 is a binding site for substrate. Residues N802 and K819 each coordinate Mo-bis(molybdopterin guanine dinucleotide).

It belongs to the prokaryotic molybdopterin-containing oxidoreductase family. NasA/NapA/NarB subfamily. In terms of assembly, component of the periplasmic nitrate reductase NapAB complex composed of NapA and NapB. Requires [4Fe-4S] cluster as cofactor. The cofactor is Mo-bis(molybdopterin guanine dinucleotide). In terms of processing, predicted to be exported by the Tat system. The position of the signal peptide cleavage has not been experimentally proven.

It is found in the periplasm. The enzyme catalyses 2 Fe(II)-[cytochrome] + nitrate + 2 H(+) = 2 Fe(III)-[cytochrome] + nitrite + H2O. Its function is as follows. Catalytic subunit of the periplasmic nitrate reductase complex NapAB. Receives electrons from NapB and catalyzes the reduction of nitrate to nitrite. The polypeptide is Periplasmic nitrate reductase (Shigella boydii serotype 18 (strain CDC 3083-94 / BS512)).